Here is a 233-residue protein sequence, read N- to C-terminus: ATP synthase subunit C lysine N-methyltransferase (233 aa).

The residue at position 1 (methionine 1) is an N-acetylmethionine. The chain crosses the membrane as a helical span at residues 38 to 58 (FLLTGLVGGTLVAVYAVATPF). Residues 56–90 (TPFVTPALRKVCLPFVPATTKQIENVVKMLRCRRG) form a required for mitochondrial location region.

The protein belongs to the ANT/ATPSC lysine N-methyltransferase family. In terms of tissue distribution, ubiquitously expressed.

It localises to the mitochondrion membrane. The catalysed reaction is L-lysyl-[protein] + 3 S-adenosyl-L-methionine = N(6),N(6),N(6)-trimethyl-L-lysyl-[protein] + 3 S-adenosyl-L-homocysteine + 3 H(+). In terms of biological role, mitochondrial protein-lysine N-methyltransferase that trimethylates ATP synthase subunit C, ATP5MC1 and ATP5MC2. Trimethylation is required for proper incorporation of the C subunit into the ATP synthase complex and mitochondrial respiration. Promotes chronic pain. Involved in persistent inflammatory and neuropathic pain: methyltransferase activity in the mitochondria of sensory neurons promotes chronic pain via a pathway that depends on the production of reactive oxygen species (ROS) and on the engagement of spinal cord microglia. The chain is ATP synthase subunit C lysine N-methyltransferase from Homo sapiens (Human).